A 495-amino-acid chain; its full sequence is UDP-N-acetylmuramoyl-L-alanyl-D-glutamate--2,6-diaminopimelate ligase (495 aa).

UDP-N-acetyl-alpha-D-muramoyl-L-alanyl-D-glutamate is bound by residues Leu27, Ser29, and His44–Ala46. Position 116–122 (Gly116–Thr122) interacts with ATP. Residues Asn157, Thr158–Thr159, Ser185, Gln191, and Arg193 contribute to the UDP-N-acetyl-alpha-D-muramoyl-L-alanyl-D-glutamate site. Residue Lys225 is modified to N6-carboxylysine. Residues Arg390, Asp414–Arg417, Gly465, and Glu469 each bind meso-2,6-diaminopimelate. A Meso-diaminopimelate recognition motif motif is present at residues Asp414–Arg417.

The protein belongs to the MurCDEF family. MurE subfamily. Requires Mg(2+) as cofactor. Carboxylation is probably crucial for Mg(2+) binding and, consequently, for the gamma-phosphate positioning of ATP.

Its subcellular location is the cytoplasm. The catalysed reaction is UDP-N-acetyl-alpha-D-muramoyl-L-alanyl-D-glutamate + meso-2,6-diaminopimelate + ATP = UDP-N-acetyl-alpha-D-muramoyl-L-alanyl-gamma-D-glutamyl-meso-2,6-diaminopimelate + ADP + phosphate + H(+). It functions in the pathway cell wall biogenesis; peptidoglycan biosynthesis. Functionally, catalyzes the addition of meso-diaminopimelic acid to the nucleotide precursor UDP-N-acetylmuramoyl-L-alanyl-D-glutamate (UMAG) in the biosynthesis of bacterial cell-wall peptidoglycan. The chain is UDP-N-acetylmuramoyl-L-alanyl-D-glutamate--2,6-diaminopimelate ligase from Shigella flexneri.